The following is a 235-amino-acid chain: Isoprenyl transferase (235 aa).

Aspartate 21 is an active-site residue. Residue aspartate 21 participates in Mg(2+) binding. Substrate-binding positions include 22-25, tryptophan 26, lysine 34, histidine 38, and 66-68; these read GNAR and SSE. The Proton acceptor role is filled by asparagine 69. Substrate is bound by residues tryptophan 70, arginine 72, arginine 183, and 189 to 191; that span reads RIS. Residue glutamate 202 participates in Mg(2+) binding.

The protein belongs to the UPP synthase family. In terms of assembly, homodimer. Requires Mg(2+) as cofactor.

Its function is as follows. Catalyzes the condensation of isopentenyl diphosphate (IPP) with allylic pyrophosphates generating different type of terpenoids. In Rickettsia conorii (strain ATCC VR-613 / Malish 7), this protein is Isoprenyl transferase.